The primary structure comprises 335 residues: Acetyl-coenzyme A carboxylase carboxyl transferase subunit alpha (335 aa).

One can recognise a CoA carboxyltransferase C-terminal domain in the interval 40–294 (QLETLAARRR…KEAIEKHLNA (255 aa)).

This sequence belongs to the AccA family. As to quaternary structure, acetyl-CoA carboxylase is a heterohexamer composed of biotin carboxyl carrier protein (AccB), biotin carboxylase (AccC) and two subunits each of ACCase subunit alpha (AccA) and ACCase subunit beta (AccD).

The protein resides in the cytoplasm. It carries out the reaction N(6)-carboxybiotinyl-L-lysyl-[protein] + acetyl-CoA = N(6)-biotinyl-L-lysyl-[protein] + malonyl-CoA. The protein operates within lipid metabolism; malonyl-CoA biosynthesis; malonyl-CoA from acetyl-CoA: step 1/1. In terms of biological role, component of the acetyl coenzyme A carboxylase (ACC) complex. First, biotin carboxylase catalyzes the carboxylation of biotin on its carrier protein (BCCP) and then the CO(2) group is transferred by the carboxyltransferase to acetyl-CoA to form malonyl-CoA. The sequence is that of Acetyl-coenzyme A carboxylase carboxyl transferase subunit alpha from Prochlorococcus marinus (strain MIT 9215).